The primary structure comprises 70 residues: Translational regulator CsrA (70 aa).

Belongs to the CsrA/RsmA family. In terms of assembly, homodimer; the beta-strands of each monomer intercalate to form a hydrophobic core, while the alpha-helices form wings that extend away from the core.

The protein resides in the cytoplasm. Functionally, a translational regulator that binds mRNA to regulate translation initiation and/or mRNA stability. Usually binds in the 5'-UTR at or near the Shine-Dalgarno sequence preventing ribosome-binding, thus repressing translation. Its main target seems to be the major flagellin gene, while its function is anatagonized by FliW. This is Translational regulator CsrA from Clostridioides difficile (strain 630) (Peptoclostridium difficile).